The following is a 403-amino-acid chain: Methylthioribose-1-phosphate isomerase (403 aa).

Catalysis depends on Asp-277, which acts as the Proton donor.

Belongs to the eIF-2B alpha/beta/delta subunits family. MtnA subfamily.

It is found in the cytoplasm. The protein localises to the nucleus. It carries out the reaction 5-(methylsulfanyl)-alpha-D-ribose 1-phosphate = 5-(methylsulfanyl)-D-ribulose 1-phosphate. Its pathway is amino-acid biosynthesis; L-methionine biosynthesis via salvage pathway; L-methionine from S-methyl-5-thio-alpha-D-ribose 1-phosphate: step 1/6. Catalyzes the interconversion of methylthioribose-1-phosphate (MTR-1-P) into methylthioribulose-1-phosphate (MTRu-1-P). In Lodderomyces elongisporus (strain ATCC 11503 / CBS 2605 / JCM 1781 / NBRC 1676 / NRRL YB-4239) (Yeast), this protein is Methylthioribose-1-phosphate isomerase.